A 170-amino-acid chain; its full sequence is Phosphopantetheine adenylyltransferase (170 aa).

Position 10 (Thr-10) interacts with substrate. ATP contacts are provided by residues 10–11 (TF) and His-18. 3 residues coordinate substrate: Lys-42, Val-79, and Arg-93. ATP contacts are provided by residues 94 to 96 (GLR), Glu-104, and 129 to 135 (TQFISST).

This sequence belongs to the bacterial CoaD family. Homohexamer. Requires Mg(2+) as cofactor.

The protein resides in the cytoplasm. The enzyme catalyses (R)-4'-phosphopantetheine + ATP + H(+) = 3'-dephospho-CoA + diphosphate. It functions in the pathway cofactor biosynthesis; coenzyme A biosynthesis; CoA from (R)-pantothenate: step 4/5. Functionally, reversibly transfers an adenylyl group from ATP to 4'-phosphopantetheine, yielding dephospho-CoA (dPCoA) and pyrophosphate. The protein is Phosphopantetheine adenylyltransferase of Parvibaculum lavamentivorans (strain DS-1 / DSM 13023 / NCIMB 13966).